The sequence spans 116 residues: Ribosome-binding factor A (116 aa).

It belongs to the RbfA family. Monomer. Binds 30S ribosomal subunits, but not 50S ribosomal subunits or 70S ribosomes.

The protein localises to the cytoplasm. Functionally, one of several proteins that assist in the late maturation steps of the functional core of the 30S ribosomal subunit. Associates with free 30S ribosomal subunits (but not with 30S subunits that are part of 70S ribosomes or polysomes). Required for efficient processing of 16S rRNA. May interact with the 5'-terminal helix region of 16S rRNA. The protein is Ribosome-binding factor A of Buchnera aphidicola subsp. Cinara cedri (strain Cc).